A 178-amino-acid chain; its full sequence is Large ribosomal subunit protein uL6 (178 aa).

It belongs to the universal ribosomal protein uL6 family. As to quaternary structure, part of the 50S ribosomal subunit.

Its function is as follows. This protein binds to the 23S rRNA, and is important in its secondary structure. It is located near the subunit interface in the base of the L7/L12 stalk, and near the tRNA binding site of the peptidyltransferase center. The polypeptide is Large ribosomal subunit protein uL6 (Helicobacter pylori (strain Shi470)).